The primary structure comprises 437 residues: Protein farnesyltransferase subunit beta (437 aa).

PFTB repeat units follow at residues 123–164 (ATDV…CIIG), 174–215 (REKL…SLTN), 222–263 (FEGT…VILK), 270–312 (LKSL…PLLH), and 332–374 (QQAL…SIAQ). Residues 248–251 (HGGY) and 291–294 (RCNK) each bind (2E,6E)-farnesyl diphosphate. The Zn(2+) site is built by Asp-297 and Cys-299. Residue 300–303 (YSFW) coordinates (2E,6E)-farnesyl diphosphate. His-362 contributes to the Zn(2+) binding site. Thr-436 is subject to Phosphothreonine.

This sequence belongs to the protein prenyltransferase subunit beta family. As to quaternary structure, heterodimer of FNTA and FNTB. It depends on Zn(2+) as a cofactor.

It catalyses the reaction L-cysteinyl-[protein] + (2E,6E)-farnesyl diphosphate = S-(2E,6E)-farnesyl-L-cysteinyl-[protein] + diphosphate. In terms of biological role, essential subunit of the farnesyltransferase complex. Catalyzes the transfer of a farnesyl moiety from farnesyl diphosphate to a cysteine at the fourth position from the C-terminus of several proteins having the C-terminal sequence Cys-aliphatic-aliphatic-X. The chain is Protein farnesyltransferase subunit beta (FNTB) from Bos taurus (Bovine).